Reading from the N-terminus, the 176-residue chain is Cytochrome b (176 aa).

3 helical membrane-spanning segments follow: residues 33 to 53 (FGSL…FLAM), 77 to 98 (WLLR…YLHV), and 113 to 133 (WNVG…GYVL). His-83 and His-97 together coordinate heme b.

It belongs to the cytochrome b family. As to quaternary structure, the cytochrome bc1 complex contains 11 subunits: 3 respiratory subunits (MT-CYB, CYC1 and UQCRFS1), 2 core proteins (UQCRC1 and UQCRC2) and 6 low-molecular weight proteins (UQCRH/QCR6, UQCRB/QCR7, UQCRQ/QCR8, UQCR10/QCR9, UQCR11/QCR10 and a cleavage product of UQCRFS1). This cytochrome bc1 complex then forms a dimer. The cofactor is heme b.

Its subcellular location is the mitochondrion inner membrane. Component of the ubiquinol-cytochrome c reductase complex (complex III or cytochrome b-c1 complex) that is part of the mitochondrial respiratory chain. The b-c1 complex mediates electron transfer from ubiquinol to cytochrome c. Contributes to the generation of a proton gradient across the mitochondrial membrane that is then used for ATP synthesis. The polypeptide is Cytochrome b (MT-CYB) (Mormopterus kalinowskii (Kalinowski's mastiff bat)).